The primary structure comprises 611 residues: Elongation factor 4 (611 aa).

Residues 12–193 (AVIRNFCIIA…TIVAKVPAPE (182 aa)) form the tr-type G domain. GTP-binding positions include 24-29 (DHGKST) and 140-143 (NKID).

It belongs to the TRAFAC class translation factor GTPase superfamily. Classic translation factor GTPase family. LepA subfamily.

Its subcellular location is the cell membrane. It catalyses the reaction GTP + H2O = GDP + phosphate + H(+). Its function is as follows. Required for accurate and efficient protein synthesis under certain stress conditions. May act as a fidelity factor of the translation reaction, by catalyzing a one-codon backward translocation of tRNAs on improperly translocated ribosomes. Back-translocation proceeds from a post-translocation (POST) complex to a pre-translocation (PRE) complex, thus giving elongation factor G a second chance to translocate the tRNAs correctly. Binds to ribosomes in a GTP-dependent manner. The protein is Elongation factor 4 of Cutibacterium acnes (strain DSM 16379 / KPA171202) (Propionibacterium acnes).